Here is a 272-residue protein sequence, read N- to C-terminus: MPGSWPPRTVIRKSSGLRTLESALYRNGLGPVAGVDEVGRGACAGPLVVAACVLGPNRLESLAALDDSKKLGEKERERLFPLIRRYALAYHVVFIPSHEVDRRGVHVANIEGMRRAVAGLSVRPGYVLSDGFRVPGLSVPSLPVIGGDAAAACIAAASVLAKVSRDRLMVEMEEQHPGYGFAEHKGYITPAHTAALTRHGPCVEHRYSYVNVRRAAEATGVRWASDRVGVRWSTESAAETEEVRRALEAFEVEWVTAPVEHEDAACAKMGSG.

Positions 30-221 (GPVAGVDEVG…VRRAAEATGV (192 aa)) constitute an RNase H type-2 domain. Positions 36, 37, and 130 each coordinate a divalent metal cation.

Belongs to the RNase HII family. It depends on Mn(2+) as a cofactor. The cofactor is Mg(2+).

The protein localises to the cytoplasm. It carries out the reaction Endonucleolytic cleavage to 5'-phosphomonoester.. Its function is as follows. Endonuclease that specifically degrades the RNA of RNA-DNA hybrids. In Mycolicibacterium smegmatis (strain ATCC 700084 / mc(2)155) (Mycobacterium smegmatis), this protein is Ribonuclease HII.